Here is a 295-residue protein sequence, read N- to C-terminus: Bifunctional protein FolD (295 aa).

NADP(+) is bound by residues 163-165 (GRS), Ser188, and Ile229.

Belongs to the tetrahydrofolate dehydrogenase/cyclohydrolase family. As to quaternary structure, homodimer.

The catalysed reaction is (6R)-5,10-methylene-5,6,7,8-tetrahydrofolate + NADP(+) = (6R)-5,10-methenyltetrahydrofolate + NADPH. It catalyses the reaction (6R)-5,10-methenyltetrahydrofolate + H2O = (6R)-10-formyltetrahydrofolate + H(+). Its pathway is one-carbon metabolism; tetrahydrofolate interconversion. Catalyzes the oxidation of 5,10-methylenetetrahydrofolate to 5,10-methenyltetrahydrofolate and then the hydrolysis of 5,10-methenyltetrahydrofolate to 10-formyltetrahydrofolate. This is Bifunctional protein FolD from Hyphomonas neptunium (strain ATCC 15444).